A 216-amino-acid chain; its full sequence is Ribosomal RNA small subunit methyltransferase G (216 aa).

Residues glycine 73, leucine 78, 124-125 (AE), and arginine 139 contribute to the S-adenosyl-L-methionine site.

The protein belongs to the methyltransferase superfamily. RNA methyltransferase RsmG family.

It localises to the cytoplasm. Functionally, specifically methylates the N7 position of guanine in position 518 of 16S rRNA. In Arthrobacter sp. (strain FB24), this protein is Ribosomal RNA small subunit methyltransferase G.